The sequence spans 482 residues: 3-isopropylmalate dehydratase large subunit (482 aa).

The interval 60–79 is disordered; the sequence is ATPDHNVPTTRAERQGGLES. [4Fe-4S] cluster-binding residues include Cys-353, Cys-414, and Cys-417.

Belongs to the aconitase/IPM isomerase family. LeuC type 1 subfamily. In terms of assembly, heterodimer of LeuC and LeuD. [4Fe-4S] cluster serves as cofactor.

It carries out the reaction (2R,3S)-3-isopropylmalate = (2S)-2-isopropylmalate. The protein operates within amino-acid biosynthesis; L-leucine biosynthesis; L-leucine from 3-methyl-2-oxobutanoate: step 2/4. In terms of biological role, catalyzes the isomerization between 2-isopropylmalate and 3-isopropylmalate, via the formation of 2-isopropylmaleate. The protein is 3-isopropylmalate dehydratase large subunit of Xanthomonas euvesicatoria pv. vesicatoria (strain 85-10) (Xanthomonas campestris pv. vesicatoria).